A 383-amino-acid polypeptide reads, in one-letter code: Cyclin-D4-2 (383 aa).

Residues 51 to 62 show a composition bias toward gly residues; it reads AAGGGGGSGGGG. 3 disordered regions span residues 51–70, 313–335, and 354–383; these read AAGG…EDMF, QPKP…PESP, and ATIA…KLSR. Low complexity predominate over residues 323–335; the sequence is SASASSSSVPESP.

It belongs to the cyclin family. Cyclin D subfamily.

This is Cyclin-D4-2 (CYCD4-2) from Oryza sativa subsp. japonica (Rice).